The sequence spans 642 residues: Kinesin-like protein KIF12 (642 aa).

Positions 1-13 are enriched in basic and acidic residues; the sequence is MEERGSPDGDPAR. A disordered region spans residues 1 to 25; sequence MEERGSPDGDPARNLEQGPEGSETP. At Ser-6 the chain carries Phosphoserine. One can recognise a Kinesin motor domain in the interval 25–360; the sequence is PIQVVLRVRP…LRYASRAQRI (336 aa). 104-111 provides a ligand contact to ATP; the sequence is GQTGSGKT. Position 369 is a phosphoserine (Ser-369). Residues 376–465 are a coiled coil; it reads QQVENELLRL…QVHDLERRLL (90 aa). Disordered stretches follow at residues 531 to 561 and 579 to 642; these read GHIS…SQSD and PSAP…LSSC. The span at 538–548 shows a compositional bias: pro residues; sequence WPPPWAPPPSP. Residues 610-642 are compositionally biased toward polar residues; that stretch reads TLTQQINSSLHLSQRQPQPSEDTQSPGQGLSSC. Ser-634 bears the Phosphoserine mark.

Belongs to the TRAFAC class myosin-kinesin ATPase superfamily. Kinesin family. Expressed in the liver.

It localises to the cytoplasm. The protein resides in the cytoskeleton. The polypeptide is Kinesin-like protein KIF12 (Kif12) (Mus musculus (Mouse)).